The chain runs to 482 residues: Cardiolipin synthase (482 aa).

2 consecutive transmembrane segments (helical) span residues 4–24 (LAYLLVILLILNVFFAAVTVF) and 34–54 (WAWLLVLTFVPIFGFIIYLIF). PLD phosphodiesterase domains are found at residues 217–244 (LNYRNHRKLAIIDGDVGYIGGFNIGDEY) and 395–422 (DNGFIHAKTLVVDGEIASVGTANMDFRS). Residues His222, Lys224, Asp229, His400, Lys402, and Asp407 contribute to the active site.

It belongs to the phospholipase D family. Cardiolipin synthase subfamily.

It localises to the cell membrane. It catalyses the reaction 2 a 1,2-diacyl-sn-glycero-3-phospho-(1'-sn-glycerol) = a cardiolipin + glycerol. Its function is as follows. Catalyzes the reversible phosphatidyl group transfer from one phosphatidylglycerol molecule to another to form cardiolipin (CL) (diphosphatidylglycerol) and glycerol. The chain is Cardiolipin synthase (cls) from Listeria innocua serovar 6a (strain ATCC BAA-680 / CLIP 11262).